The sequence spans 395 residues: MRTLGGFTFPCDAPVFVRVDFNVPMDEVGTITDDLRIRASLPTIESLLGRGAPLILISHLGRPVKNEQQGFSLKPCAERLSEYIGVNVPLVDFLDLDTKLYGELTRHLDKSGIVLFENIRFFAEETSKAQADRRILAEQLAPFAGAYVNDAFGASHRRHASVYELAQAFSNKAAGFLIESEMQAFSHLASEAKRPYTVILGGAKLSDKLRLIENILPTVDRLLLCGGMAFTFLAAQGCETGKSLLEESFISEANKIIDFAKQNNVELILPVDVIEARSLTSPLGVVSKAESISYMGLDIGPETQSIFRNVIQDSKTVFWNGPAGLFENPSFSNGTRALLDALSSSSAFTFIGGGDTAAAVSLLGFDYGDFSHVSTGGGACLELLEGKILPALEVL.

Substrate contacts are provided by residues 20–22, Arg36, 59–62, Arg120, and Arg157; these read DFN and HLGR. Residues Lys208, Gly296, Glu327, and 353–356 contribute to the ATP site; that span reads GGDT.

It belongs to the phosphoglycerate kinase family. In terms of assembly, monomer.

It is found in the cytoplasm. It carries out the reaction (2R)-3-phosphoglycerate + ATP = (2R)-3-phospho-glyceroyl phosphate + ADP. It functions in the pathway carbohydrate degradation; glycolysis; pyruvate from D-glyceraldehyde 3-phosphate: step 2/5. This Tropheryma whipplei (strain TW08/27) (Whipple's bacillus) protein is Phosphoglycerate kinase.